A 97-amino-acid chain; its full sequence is Pollen allergen Lol p 2-A (97 aa).

In terms of domain architecture, Expansin-like CBD spans 15-96 (KNLALSIKYN…DFKVGTTYKP (82 aa)).

This sequence belongs to the expansin family. Expansin B subfamily.

The protein resides in the secreted. The protein is Pollen allergen Lol p 2-A of Lolium perenne (Perennial ryegrass).